A 157-amino-acid polypeptide reads, in one-letter code: Putative pre-16S rRNA nuclease (157 aa).

Belongs to the YqgF nuclease family.

It localises to the cytoplasm. Functionally, could be a nuclease involved in processing of the 5'-end of pre-16S rRNA. In Ruegeria sp. (strain TM1040) (Silicibacter sp.), this protein is Putative pre-16S rRNA nuclease.